A 441-amino-acid chain; its full sequence is Xaa-Pro dipeptidase (441 aa).

Mn(2+) contacts are provided by Asp244, Asp255, His336, Glu381, and Glu420.

It belongs to the peptidase M24B family. Bacterial-type prolidase subfamily. Requires Mn(2+) as cofactor.

The enzyme catalyses Xaa-L-Pro dipeptide + H2O = an L-alpha-amino acid + L-proline. Its function is as follows. Splits dipeptides with a prolyl residue in the C-terminal position. The chain is Xaa-Pro dipeptidase from Xanthomonas campestris pv. campestris (strain 8004).